We begin with the raw amino-acid sequence, 205 residues long: Large ribosomal subunit protein bL25 (205 aa).

It belongs to the bacterial ribosomal protein bL25 family. CTC subfamily. As to quaternary structure, part of the 50S ribosomal subunit; part of the 5S rRNA/L5/L18/L25 subcomplex. Contacts the 5S rRNA. Binds to the 5S rRNA independently of L5 and L18.

Its function is as follows. This is one of the proteins that binds to the 5S RNA in the ribosome where it forms part of the central protuberance. This Stutzerimonas stutzeri (strain A1501) (Pseudomonas stutzeri) protein is Large ribosomal subunit protein bL25.